The primary structure comprises 360 residues: Phospho-N-acetylmuramoyl-pentapeptide-transferase (360 aa).

A run of 10 helical transmembrane segments spans residues 26-46, 70-90, 94-114, 132-152, 168-188, 199-219, 239-259, 263-283, 288-308, and 338-358; these read AIMS…RLIA, GTPT…ALLW, SNPY…VGFV, WKYF…YMHG, VMPQ…VGTS, GLAI…AWAT, LVVL…FNTY, VFMG…IAVL, LLLV…ILQV, and VIVR…ATLK.

Belongs to the glycosyltransferase 4 family. MraY subfamily. Mg(2+) serves as cofactor.

It localises to the cell inner membrane. It carries out the reaction UDP-N-acetyl-alpha-D-muramoyl-L-alanyl-gamma-D-glutamyl-meso-2,6-diaminopimeloyl-D-alanyl-D-alanine + di-trans,octa-cis-undecaprenyl phosphate = di-trans,octa-cis-undecaprenyl diphospho-N-acetyl-alpha-D-muramoyl-L-alanyl-D-glutamyl-meso-2,6-diaminopimeloyl-D-alanyl-D-alanine + UMP. It participates in cell wall biogenesis; peptidoglycan biosynthesis. Its function is as follows. Catalyzes the initial step of the lipid cycle reactions in the biosynthesis of the cell wall peptidoglycan: transfers peptidoglycan precursor phospho-MurNAc-pentapeptide from UDP-MurNAc-pentapeptide onto the lipid carrier undecaprenyl phosphate, yielding undecaprenyl-pyrophosphoryl-MurNAc-pentapeptide, known as lipid I. This is Phospho-N-acetylmuramoyl-pentapeptide-transferase from Photobacterium profundum (strain SS9).